Here is a 158-residue protein sequence, read N- to C-terminus: 2-C-methyl-D-erythritol 2,4-cyclodiphosphate synthase (158 aa).

Positions 8 and 10 each coordinate a divalent metal cation. 4-CDP-2-C-methyl-D-erythritol 2-phosphate contacts are provided by residues 8-10 (DVH) and 34-35 (HS). Position 42 (H42) interacts with a divalent metal cation. Residues 56 to 58 (DIG), 132 to 135 (TTNE), and R142 contribute to the 4-CDP-2-C-methyl-D-erythritol 2-phosphate site.

The protein belongs to the IspF family. Homotrimer. The cofactor is a divalent metal cation.

It catalyses the reaction 4-CDP-2-C-methyl-D-erythritol 2-phosphate = 2-C-methyl-D-erythritol 2,4-cyclic diphosphate + CMP. Its pathway is isoprenoid biosynthesis; isopentenyl diphosphate biosynthesis via DXP pathway; isopentenyl diphosphate from 1-deoxy-D-xylulose 5-phosphate: step 4/6. Involved in the biosynthesis of isopentenyl diphosphate (IPP) and dimethylallyl diphosphate (DMAPP), two major building blocks of isoprenoid compounds. Catalyzes the conversion of 4-diphosphocytidyl-2-C-methyl-D-erythritol 2-phosphate (CDP-ME2P) to 2-C-methyl-D-erythritol 2,4-cyclodiphosphate (ME-CPP) with a corresponding release of cytidine 5-monophosphate (CMP). This chain is 2-C-methyl-D-erythritol 2,4-cyclodiphosphate synthase, found in Chlorobium phaeobacteroides (strain DSM 266 / SMG 266 / 2430).